A 392-amino-acid polypeptide reads, in one-letter code: Proteasomal ATPase-associated factor 1 (392 aa).

A2 is modified (N-acetylalanine). WD repeat units lie at residues 90–129 (IHTKSITCLDISSGGGLGVSSSADGSMKIWQASNGELRRV), 132–171 (GHVFDVNCCRFFPSGLVVLSGGMDAQLKIWSAEDASCVVT), 174–215 (GHKG…GVIA), 278–316 (IGSDAFNCCTFLSGFLLLAGTQDGNIYQLDVRNPRTPVQ), and 360–392 (ADCDPVYKVATWEKQIYTCCRDGLVRRYQLSDL).

Belongs to the WD repeat PAAF1/RPN14 family. Interacts with PSMC1, PSMC2, PSMC3, PSMC4, PSMC5 and PSMC6. Interacts with SUPT6H.

Inhibits proteasome 26S assembly and activity by impairing the association of the 19S regulatory complex with the 20S core. Protects SUPT6H from proteasomal degradation. In Bos taurus (Bovine), this protein is Proteasomal ATPase-associated factor 1 (PAAF1).